The following is a 1092-amino-acid chain: Isoleucine--tRNA ligase (1092 aa).

Residues 53-63 carry the 'HIGH' region motif; sequence PFANGLPHYGH. The 'KMSKS' region motif lies at 613 to 617; that stretch reads KLSKR. An ATP-binding site is contributed by K616.

The protein belongs to the class-I aminoacyl-tRNA synthetase family. IleS type 2 subfamily. As to quaternary structure, monomer. The cofactor is Zn(2+).

It is found in the cytoplasm. The enzyme catalyses tRNA(Ile) + L-isoleucine + ATP = L-isoleucyl-tRNA(Ile) + AMP + diphosphate. Its function is as follows. Catalyzes the attachment of isoleucine to tRNA(Ile). As IleRS can inadvertently accommodate and process structurally similar amino acids such as valine, to avoid such errors it has two additional distinct tRNA(Ile)-dependent editing activities. One activity is designated as 'pretransfer' editing and involves the hydrolysis of activated Val-AMP. The other activity is designated 'posttransfer' editing and involves deacylation of mischarged Val-tRNA(Ile). This chain is Isoleucine--tRNA ligase, found in Rickettsia africae (strain ESF-5).